Here is a 25-residue protein sequence, read N- to C-terminus: Small ribosomal subunit protein eS32 (25 aa).

A disordered region spans residues 1–25 (MRAKWRKKRVRRLKRKRRKVRARSK).

It belongs to the eukaryotic ribosomal protein eS32 family. Component of the small ribosomal subunit.

The protein is Small ribosomal subunit protein eS32 (RPL41) of Eremothecium gossypii (strain ATCC 10895 / CBS 109.51 / FGSC 9923 / NRRL Y-1056) (Yeast).